The chain runs to 313 residues: MLDNVLRIATRQSPLALWQAHYVKDALMAKHPGLTVELVPMVTRGDVILDTPLAKVGGKGLFVKELEVALLENRADIAVHSMKDVPVEFPQGLGLVTICEREDPRDAFVSNKYASLDELPAGSIVGTSSLRRQCQLAERRPDLIIRSLRGNVGTRLSKLDNGEYDAIILAVAGLKRLGLESRIRDALPPEVSLPAVGQGAVGIECRLDDTRTRELLAALNHPETALRVTAERAMNTRLEGGCQVPIGSYAELIGGEIWLRALVGAPDGSQMIRGERRGSPQDAEKMGISLAEELLNNGARAILADVYNGDAPV.

An S-(dipyrrolylmethanemethyl)cysteine modification is found at C242.

The protein belongs to the HMBS family. In terms of assembly, monomer. Dipyrromethane is required as a cofactor.

The catalysed reaction is 4 porphobilinogen + H2O = hydroxymethylbilane + 4 NH4(+). It functions in the pathway porphyrin-containing compound metabolism; protoporphyrin-IX biosynthesis; coproporphyrinogen-III from 5-aminolevulinate: step 2/4. In terms of biological role, tetrapolymerization of the monopyrrole PBG into the hydroxymethylbilane pre-uroporphyrinogen in several discrete steps. The protein is Porphobilinogen deaminase of Escherichia fergusonii (strain ATCC 35469 / DSM 13698 / CCUG 18766 / IAM 14443 / JCM 21226 / LMG 7866 / NBRC 102419 / NCTC 12128 / CDC 0568-73).